Reading from the N-terminus, the 467-residue chain is Ribulose bisphosphate carboxylase large chain (467 aa).

Position 6 is an N6,N6,N6-trimethyllysine (lysine 6). Substrate-binding residues include asparagine 115 and threonine 165. The Proton acceptor role is filled by lysine 167. Residue lysine 169 coordinates substrate. Residues lysine 193, aspartate 195, and glutamate 196 each contribute to the Mg(2+) site. Lysine 193 carries the post-translational modification N6-carboxylysine. The active-site Proton acceptor is histidine 286. Substrate contacts are provided by arginine 287, histidine 319, and serine 371.

This sequence belongs to the RuBisCO large chain family. Type I subfamily. In terms of assembly, heterohexadecamer of 8 large chains and 8 small chains; disulfide-linked. The disulfide link is formed within the large subunit homodimers. Requires Mg(2+) as cofactor. The disulfide bond which can form in the large chain dimeric partners within the hexadecamer appears to be associated with oxidative stress and protein turnover.

It localises to the plastid. The protein localises to the chloroplast. It carries out the reaction 2 (2R)-3-phosphoglycerate + 2 H(+) = D-ribulose 1,5-bisphosphate + CO2 + H2O. It catalyses the reaction D-ribulose 1,5-bisphosphate + O2 = 2-phosphoglycolate + (2R)-3-phosphoglycerate + 2 H(+). Functionally, ruBisCO catalyzes two reactions: the carboxylation of D-ribulose 1,5-bisphosphate, the primary event in carbon dioxide fixation, as well as the oxidative fragmentation of the pentose substrate in the photorespiration process. Both reactions occur simultaneously and in competition at the same active site. This is Ribulose bisphosphate carboxylase large chain from Cedrus atlantica (Atlas cedar).